The chain runs to 667 residues: Protein OS-9 (667 aa).

The first 25 residues, methionine 1–threonine 25, serve as a signal peptide directing secretion. The MRH domain occupies alanine 108–histidine 230. A disulfide bond links cysteine 110 and cysteine 123. A mannooligosaccharide derivative is bound by residues tryptophan 117, tryptophan 118, and glutamine 130. Asparagine 177 carries an N-linked (GlcNAc...) asparagine glycan. 2 disulfides stabilise this stretch: cysteine 181–cysteine 216 and cysteine 196–cysteine 228. The a mannooligosaccharide derivative site is built by aspartate 182, arginine 188, glutamate 212, and tyrosine 218. Disordered regions lie at residues glutamine 262 to glutamate 450, glutamate 506 to valine 541, and glutamate 636 to phenylalanine 667. 3 stretches are compositionally biased toward basic and acidic residues: residues alanine 263 to proline 279, glutamate 304 to threonine 328, and proline 396 to proline 408. Acidic residues predominate over residues glutamine 410–glutamate 429. The segment covering arginine 430–glutamate 450 has biased composition (basic and acidic residues). A compositionally biased stretch (basic residues) spans lysine 514–proline 523. A compositionally biased stretch (basic and acidic residues) spans glutamate 636–tyrosine 647.

Belongs to the OS-9 family. Component of the HRD1 complex, which comprises at least SYNV1/HRD1, DERL1/2, FAM8A1, HERPUD1/HERP, OS9, SEL1L and UBE2J1. FAM8A1 is stabilized by interaction with SYNV1, which prevents its proteasomal degradation. OS9 and UBE2J1 recruitment to the complex may be mediated by SEL1L. Through this complex, may interact with ERLEC1 and HSPA5. Interacts (via C-terminus) with CPNE6 (via second C2 domain); this interaction occurs in a calcium-dependent manner in vitro. Interacts with CREB3. Post-translationally, intramolecular disulfide bonds.

Its subcellular location is the endoplasmic reticulum lumen. In terms of biological role, lectin component of the HRD1 complex, which functions in endoplasmic reticulum (ER) quality control and ER-associated degradation (ERAD). Specifically recognizes and binds improperly folded glycoproteins as well as hyperglycosylated proteins, retain them in the ER, and transfers them to the ubiquitination machinery and promote their degradation. Possible targets include TRPV4 as well as hyperglycosylated HSP90B1. The protein is Protein OS-9 (OS9) of Bos taurus (Bovine).